The primary structure comprises 235 residues: tRNA1(Val) (adenine(37)-N6)-methyltransferase (235 aa).

This sequence belongs to the methyltransferase superfamily. tRNA (adenine-N(6)-)-methyltransferase family.

It is found in the cytoplasm. The catalysed reaction is adenosine(37) in tRNA1(Val) + S-adenosyl-L-methionine = N(6)-methyladenosine(37) in tRNA1(Val) + S-adenosyl-L-homocysteine + H(+). Its function is as follows. Specifically methylates the adenine in position 37 of tRNA(1)(Val) (anticodon cmo5UAC). This is tRNA1(Val) (adenine(37)-N6)-methyltransferase from Flavobacterium johnsoniae (strain ATCC 17061 / DSM 2064 / JCM 8514 / BCRC 14874 / CCUG 350202 / NBRC 14942 / NCIMB 11054 / UW101) (Cytophaga johnsonae).